A 266-amino-acid polypeptide reads, in one-letter code: Interleukin-1 beta (266 aa).

Positions 1 to 113 are excised as a propeptide; that stretch reads MATVPEPTNE…ETYDDDLLCD (113 aa).

The protein belongs to the IL-1 family. In terms of assembly, monomer. In its precursor form, weakly interacts with full-length MEFV; the mature cytokine does not interact at all. Interacts with integrins ITGAV:ITGBV and ITGA5:ITGB1; integrin-binding is required for IL1B signaling. Interacts with cargo receptor TMED10; the interaction is direct and is required for the secretion of IL1B mature form. Interacts with HSP90AB1; the interaction facilitates cargo translocation into the ERGIC. Interacts with HSP90B1; the interaction facilitates cargo translocation into the ERGIC.

It is found in the cytoplasm. The protein localises to the cytosol. The protein resides in the secreted. Its subcellular location is the lysosome. It localises to the extracellular exosome. Potent pro-inflammatory cytokine. Initially discovered as the major endogenous pyrogen, induces prostaglandin synthesis, neutrophil influx and activation, T-cell activation and cytokine production, B-cell activation and antibody production, and fibroblast proliferation and collagen production. Promotes Th17 differentiation of T-cells. Synergizes with IL12/interleukin-12 to induce IFNG synthesis from T-helper 1 (Th1) cells. Plays a role in angiogenesis by inducing VEGF production synergistically with TNF and IL6. Involved in transduction of inflammation downstream of pyroptosis: its mature form is specifically released in the extracellular milieu by passing through the gasdermin-D (GSDMD) pore. This chain is Interleukin-1 beta (IL1B), found in Delphinapterus leucas (Beluga whale).